A 301-amino-acid chain; its full sequence is uncharacterized protein (301 aa).

Disordered regions lie at residues 56-126 and 149-173; these read ESPT…ESDL and LSTEDPKKVIVQSNTSSSSMSDASS. Residues 71 to 82 show a composition bias toward basic and acidic residues; that stretch reads VQKENQKPKDLN. A compositionally biased stretch (polar residues) spans 93–102; that stretch reads KNSSGLVSQI. Low complexity predominate over residues 161 to 173; sequence SNTSSSSMSDASS.

This is an uncharacterized protein from Caenorhabditis elegans.